We begin with the raw amino-acid sequence, 538 residues long: Nucleobase-ascorbate transporter 7 (538 aa).

Over residues 1-11 (MAGGGGGGGGV) the composition is skewed to gly residues. Positions 1–20 (MAGGGGGGGGVAPPLKHDGL) are disordered. The next 12 membrane-spanning stretches (helical) occupy residues 45–65 (AILLGFQHYLVMLGTTVLIPT), 81–101 (MVQTLLFVSGLNTLLQSFFGT), 103–123 (LPAVIGGSYTYVPTTLSIILA), 143–163 (IQGALIVASILQIVVGFSGLW), 166–186 (VVRLLSPLSAVPLVALAGFGL), 191–211 (FPLLAKCIEIGLPEIILLLLF), 229–249 (FAVIFSVVIVWIYAHLLTVGG), 295–315 (FAMMAVSFVSLIESTGTYIVV), 372–394 (VVQISAGFMIFFSILGKFGAIFA), 398–420 (APVVAALHCLFFAYVGAGGLSLL), 432–452 (FILGFSVFMGLSIPQYFNQYT), and 471–491 (INVPFSSKAFVAGILAFFLDV).

The protein belongs to the nucleobase:cation symporter-2 (NCS2) (TC 2.A.40) family. As to expression, expressed exclusively in ovules.

Its subcellular location is the cell membrane. The sequence is that of Nucleobase-ascorbate transporter 7 (NAT7) from Arabidopsis thaliana (Mouse-ear cress).